A 664-amino-acid polypeptide reads, in one-letter code: Transketolase 1 (664 aa).

Position 26 (histidine 26) interacts with substrate. Thiamine diphosphate contacts are provided by residues histidine 66 and 114 to 116 (GPL). Aspartate 155 is a Mg(2+) binding site. Thiamine diphosphate contacts are provided by glycine 156 and asparagine 185. Mg(2+)-binding residues include asparagine 185 and isoleucine 187. Substrate-binding residues include histidine 260, arginine 357, and serine 384. A thiamine diphosphate-binding site is contributed by histidine 260. Catalysis depends on glutamate 411, which acts as the Proton donor. Position 437 (phenylalanine 437) interacts with thiamine diphosphate. Positions 461, 469, and 520 each coordinate substrate.

This sequence belongs to the transketolase family. In terms of assembly, homodimer. Requires Mg(2+) as cofactor. It depends on Ca(2+) as a cofactor. Mn(2+) serves as cofactor. The cofactor is Co(2+). Thiamine diphosphate is required as a cofactor.

It catalyses the reaction D-sedoheptulose 7-phosphate + D-glyceraldehyde 3-phosphate = aldehydo-D-ribose 5-phosphate + D-xylulose 5-phosphate. Catalyzes the transfer of a two-carbon ketol group from a ketose donor to an aldose acceptor, via a covalent intermediate with the cofactor thiamine pyrophosphate. This chain is Transketolase 1 (tkt1), found in Vibrio vulnificus (strain YJ016).